A 193-amino-acid chain; its full sequence is Interferon lambda-3 (193 aa).

Residues 1-19 form the signal peptide; it reads MLLLLLPLLLAAVLTRTQA. 3 cysteine pairs are disulfide-bonded: Cys35–Cys132, Cys69–Cys166, and Cys185–Cys192.

This sequence belongs to the lambda interferon family.

It is found in the secreted. In terms of biological role, cytokine with antiviral, antitumour and immunomodulatory activities. Plays a critical role in the antiviral host defense, predominantly in the epithelial tissues. Acts as a ligand for the heterodimeric class II cytokine receptor composed of IL10RB and IFNLR1, and receptor engagement leads to the activation of the JAK/STAT signaling pathway resulting in the expression of IFN-stimulated genes (ISG), which mediate the antiviral state. Has a restricted receptor distribution and therefore restricted targets: is primarily active in epithelial cells and this cell type-selective action is because of the epithelial cell-specific expression of its receptor IFNLR1. Seems not to be essential for early virus-activated host defense in vaginal infection, but plays an important role in Toll-like receptor (TLR)-induced antiviral defense. Plays a significant role in the antiviral immune defense in the intestinal epithelium. Exerts an immunomodulatory effect by up-regulating MHC class I antigen expression. The protein is Interferon lambda-3 (Ifnl3) of Mus musculus (Mouse).